Consider the following 854-residue polypeptide: N-terminal acetyltransferase A complex subunit NAT1 (854 aa).

S2 is subject to N-acetylserine. TPR repeat units lie at residues 20–53 (ENDQ…DGSH), 54–87 (VDSL…IEGA), 91–124 (PICC…GSTN), 126–162 (QIYR…RANW), 241–274 (FGLL…NPDN), 384–417 (IWTN…TPTL), and 452–485 (RFIN…DDSV). Residues 623-667 (LKRKSDSLDENSDEIQNNGQNSSSQKKKAKKEAAAMNKRKETEAK) are a coiled coil. The disordered stretch occupies residues 626–668 (KSDSLDENSDEIQNNGQNSSSQKKKAKKEAAAMNKRKETEAKS). S674 is modified (phosphoserine). Residues 728 to 761 (ALCFASLNKFAKRFGTTSGLFGSMAIVLLHATRN) form a TPR 8 repeat.

Component of the N-terminal acetyltransferase A (NatA) complex, which is composed of ARD1, NAT1 and NAT5. Can self-associate. NAT1 associates with the nascent polypeptide chain and the ribosome. Post-translationally, the N-terminus is blocked.

The protein resides in the cytoplasm. Its function is as follows. Non-catalytic component of the NatA N-terminal acetyltransferase, which catalyzes acetylation of proteins beginning with Met-Ser, Met-Gly and Met-Ala. N-acetylation plays a role in normal eukaryotic translation and processing, protect against proteolytic degradation and protein turnover. NAT1 anchors ARD1 and NAT5 to the ribosome and may present the N termini of nascent polypeptides for acetylation. The chain is N-terminal acetyltransferase A complex subunit NAT1 (NAT1) from Saccharomyces cerevisiae (strain ATCC 204508 / S288c) (Baker's yeast).